Consider the following 491-residue polypeptide: Mitochondrial distribution and morphology protein 12 (491 aa).

One can recognise an SMP-LTD domain in the interval 1–491; that stretch reads MSIDLNWEAA…VFPSYWTFLV (491 aa). Acidic residues predominate over residues 72–82; sequence ESDSSEDEDGE. Disordered stretches follow at residues 72-123, 201-313, and 389-434; these read ESDS…NHHD, GWPD…MRER, and GDED…QPRR. 2 stretches are compositionally biased toward basic and acidic residues: residues 83–123 and 213–229; these read GHDA…NHHD and MTDHTTGRTRREDHNKN. A compositionally biased stretch (polar residues) spans 230–249; it reads ETGSPSRPSTAHTNPTQLSH. A compositionally biased stretch (low complexity) spans 252 to 262; it reads SAASSSNNTSN. Residues 270–279 show a composition bias toward polar residues; that stretch reads DHTSSTTATT. The segment covering 400–421 has biased composition (low complexity); it reads STANTTTAASGSSTDNNNNNNE.

This sequence belongs to the MDM12 family. Component of the ER-mitochondria encounter structure (ERMES) or MDM complex, composed of mmm1, mdm10, mdm12 and mdm34. A mmm1 homodimer associates with one molecule of mdm12 on each side in a pairwise head-to-tail manner, and the SMP-LTD domains of mmm1 and mdm12 generate a continuous hydrophobic tunnel for phospholipid trafficking.

The protein localises to the mitochondrion outer membrane. It is found in the endoplasmic reticulum membrane. Functionally, component of the ERMES/MDM complex, which serves as a molecular tether to connect the endoplasmic reticulum (ER) and mitochondria. Components of this complex are involved in the control of mitochondrial shape and protein biogenesis, and function in nonvesicular lipid trafficking between the ER and mitochondria. Mdm12 is required for the interaction of the ER-resident membrane protein mmm1 and the outer mitochondrial membrane-resident beta-barrel protein mdm10. The mdm12-mmm1 subcomplex functions in the major beta-barrel assembly pathway that is responsible for biogenesis of all mitochondrial outer membrane beta-barrel proteins, and acts in a late step after the SAM complex. The mdm10-mdm12-mmm1 subcomplex further acts in the TOM40-specific pathway after the action of the mdm12-mmm1 complex. Essential for establishing and maintaining the structure of mitochondria and maintenance of mtDNA nucleoids. This Talaromyces stipitatus (strain ATCC 10500 / CBS 375.48 / QM 6759 / NRRL 1006) (Penicillium stipitatum) protein is Mitochondrial distribution and morphology protein 12.